The sequence spans 192 residues: MTVQLALVPILLLGTAAVMVHCMPFSSSQRNDTLERRWETLFSRSMARIPGEKKDMSRESDYLLGIKRLRRLYCNVGIGFHIQVLPDGRINGMHNENRYSLLEISPVEVGVVSLYGIKSAMFVAMNAKGKLYGSRYFNEECKFKETLLPNNYNAYESRKYPGMYIALGKNGRTKKGNRVSPTMTLTHFLPRI.

An N-terminal signal peptide occupies residues 1–22 (MTVQLALVPILLLGTAAVMVHC).

This sequence belongs to the heparin-binding growth factors family.

The protein resides in the secreted. Plays an important role in the regulation of embryonic development, cell proliferation, and cell differentiation. Good candidate for an inducing factor with possible roles both in mesoderm induction at the blastula stage and in the formation of the anteroposterior axis at the gastrula stage. This is Fibroblast growth factor 4B (fgf4-b) from Xenopus laevis (African clawed frog).